The primary structure comprises 264 residues: Triosephosphate isomerase (264 aa).

12 to 14 (NWK) is a binding site for substrate. Residue His104 is the Electrophile of the active site. Catalysis depends on Glu176, which acts as the Proton acceptor. Substrate-binding positions include Gly182, Ser222, and 243–244 (GG).

Belongs to the triosephosphate isomerase family. Homodimer.

It localises to the cytoplasm. The enzyme catalyses D-glyceraldehyde 3-phosphate = dihydroxyacetone phosphate. Its pathway is carbohydrate biosynthesis; gluconeogenesis. It functions in the pathway carbohydrate degradation; glycolysis; D-glyceraldehyde 3-phosphate from glycerone phosphate: step 1/1. Involved in the gluconeogenesis. Catalyzes stereospecifically the conversion of dihydroxyacetone phosphate (DHAP) to D-glyceraldehyde-3-phosphate (G3P). This chain is Triosephosphate isomerase, found in Bifidobacterium adolescentis (strain ATCC 15703 / DSM 20083 / NCTC 11814 / E194a).